The following is a 298-amino-acid chain: MFNGIIVIDKAAGMTSGDVVYKLRRLLKQKKIGHAGTLDPEVTGVLPIALGQATKLIELMHERPKAYVGEGMLGLATDSYDLEGKILAERALSQPVSDQAIKAAMEKLIGEIVQQPPIYSAVRVNGKRLYEYAREGIPVERPKRTVQVFRYDLTAPSQFDPEKGRQTFTYEVECSKGTYVRSLVNDLGEELGLPAVMTKLRRTASSGYKLQDAVTLEELADNLDHAEDYIQPIDSFFADYQQVDLDAALWQQVKNGAWIKLPLDADKVALRYNKTVKAIYRAKGQGLYCPDLMLLSNE.

Residue D39 is the Nucleophile of the active site.

It belongs to the pseudouridine synthase TruB family. Type 1 subfamily.

The catalysed reaction is uridine(55) in tRNA = pseudouridine(55) in tRNA. Responsible for synthesis of pseudouridine from uracil-55 in the psi GC loop of transfer RNAs. The protein is tRNA pseudouridine synthase B of Lactobacillus delbrueckii subsp. bulgaricus (strain ATCC BAA-365 / Lb-18).